A 229-amino-acid chain; its full sequence is Potassium/proton antiporter CemA (229 aa).

A run of 4 helical transmembrane segments spans residues 7–27 (FTPL…SLSF), 114–134 (LICF…LLIL), 154–174 (ILLL…ELMI), and 189–209 (IISG…KYWI).

The protein belongs to the CemA family.

The protein resides in the plastid. It localises to the chloroplast inner membrane. The catalysed reaction is K(+)(in) + H(+)(out) = K(+)(out) + H(+)(in). Its function is as follows. Contributes to K(+)/H(+) antiport activity by supporting proton efflux to control proton extrusion and homeostasis in chloroplasts in a light-dependent manner to modulate photosynthesis. Prevents excessive induction of non-photochemical quenching (NPQ) under continuous-light conditions. Indirectly promotes efficient inorganic carbon uptake into chloroplasts. The chain is Potassium/proton antiporter CemA from Gossypium hirsutum (Upland cotton).